The sequence spans 160 residues: Transmembrane protein 191A (160 aa).

Residues Phe24–Ile44 form a helical membrane-spanning segment.

The protein belongs to the TMEM191 family.

The protein localises to the membrane. This is Transmembrane protein 191A (TMEM191A) from Homo sapiens (Human).